We begin with the raw amino-acid sequence, 430 residues long: Adenylosuccinate synthetase (430 aa).

Residues 12 to 18 (GDEGKGK) and 40 to 42 (GHT) contribute to the GTP site. Asp13 (proton acceptor) is an active-site residue. Mg(2+)-binding residues include Asp13 and Gly40. IMP is bound by residues 13 to 16 (DEGK), 38 to 41 (NAGH), Thr129, Arg143, Gln224, Thr239, and Arg303. Residue His41 is the Proton donor of the active site. Substrate is bound at residue 299 to 305 (TVSNRER). GTP-binding positions include Arg305, 331–333 (KLD), and 413–415 (STG).

Belongs to the adenylosuccinate synthetase family. As to quaternary structure, homodimer. Requires Mg(2+) as cofactor.

It is found in the cytoplasm. It carries out the reaction IMP + L-aspartate + GTP = N(6)-(1,2-dicarboxyethyl)-AMP + GDP + phosphate + 2 H(+). The protein operates within purine metabolism; AMP biosynthesis via de novo pathway; AMP from IMP: step 1/2. Plays an important role in the de novo pathway of purine nucleotide biosynthesis. Catalyzes the first committed step in the biosynthesis of AMP from IMP. This Ehrlichia ruminantium (strain Welgevonden) protein is Adenylosuccinate synthetase.